The chain runs to 113 residues: T cell receptor alpha variable 36/delta variable 7 (113 aa).

An N-terminal signal peptide occupies residues 1-21 (MMKCPQALLAIFWLLLSWVSS). Positions 23-113 (DKVVQSPLSL…DSAIYLCAVE (91 aa)) constitute an Ig-like domain. N-linked (GlcNAc...) asparagine glycosylation is found at N43 and N96. Cysteines 44 and 110 form a disulfide.

Alpha-beta TR is a heterodimer composed of an alpha and beta chain; disulfide-linked. The alpha-beta TR is associated with the transmembrane signaling CD3 coreceptor proteins to form the TR-CD3 (TcR or TCR). The assembly of alpha-beta TR heterodimers with CD3 occurs in the endoplasmic reticulum where a single alpha-beta TR heterodimer associates with one CD3D-CD3E heterodimer, one CD3G-CD3E heterodimer and one CD247 homodimer forming a stable octameric structure. CD3D-CD3E and CD3G-CD3E heterodimers preferentially associate with TR alpha and TR beta chains, respectively. The association of the CD247 homodimer is the last step of TcR assembly in the endoplasmic reticulum and is required for transport to the cell surface.

It is found in the cell membrane. Functionally, v region of the variable domain of T cell receptor (TR) alpha chain that participates in the antigen recognition. Alpha-beta T cell receptors are antigen specific receptors which are essential to the immune response and are present on the cell surface of T lymphocytes. Recognize peptide-major histocompatibility (MH) (pMH) complexes that are displayed by antigen presenting cells (APC), a prerequisite for efficient T cell adaptive immunity against pathogens. Binding of alpha-beta TR to pMH complex initiates TR-CD3 clustering on the cell surface and intracellular activation of LCK that phosphorylates the ITAM motifs of CD3G, CD3D, CD3E and CD247 enabling the recruitment of ZAP70. In turn ZAP70 phosphorylates LAT, which recruits numerous signaling molecules to form the LAT signalosome. The LAT signalosome propagates signal branching to three major signaling pathways, the calcium, the mitogen-activated protein kinase (MAPK) kinase and the nuclear factor NF-kappa-B (NF-kB) pathways, leading to the mobilization of transcription factors that are critical for gene expression and essential for T cell growth and differentiation. The T cell repertoire is generated in the thymus, by V-(D)-J rearrangement. This repertoire is then shaped by intrathymic selection events to generate a peripheral T cell pool of self-MH restricted, non-autoaggressive T cells. Post-thymic interaction of alpha-beta TR with the pMH complexes shapes TR structural and functional avidity. This chain is T cell receptor alpha variable 36/delta variable 7, found in Homo sapiens (Human).